Here is a 285-residue protein sequence, read N- to C-terminus: Urease accessory protein UreD 1 (285 aa).

This sequence belongs to the UreD family. As to quaternary structure, ureD, UreF and UreG form a complex that acts as a GTP-hydrolysis-dependent molecular chaperone, activating the urease apoprotein by helping to assemble the nickel containing metallocenter of UreC. The UreE protein probably delivers the nickel.

The protein resides in the cytoplasm. Required for maturation of urease via the functional incorporation of the urease nickel metallocenter. The sequence is that of Urease accessory protein UreD 1 from Pseudomonas syringae pv. syringae (strain B728a).